The chain runs to 169 residues: Cysteine synthase B (169 aa).

Lys-45 bears the N6-(pyridoxal phosphate)lysine mark. Residue Asn-75 participates in pyridoxal 5'-phosphate binding. The disordered stretch occupies residues 146–169 (ANGDNPEAHYTSTGPEIWRQTGGT).

It belongs to the cysteine synthase/cystathionine beta-synthase family. It depends on pyridoxal 5'-phosphate as a cofactor.

The enzyme catalyses O-acetyl-L-serine + hydrogen sulfide = L-cysteine + acetate. Its pathway is amino-acid biosynthesis; L-cysteine biosynthesis; L-cysteine from L-serine: step 2/2. The polypeptide is Cysteine synthase B (cysM) (Pseudomonas syringae pv. syringae).